A 297-amino-acid polypeptide reads, in one-letter code: Protein PecM (297 aa).

The next 10 membrane-spanning stretches (helical) occupy residues 6–26, 38–58, 60–80, 86–106, 116–136, 138–158, 167–187, 203–223, 231–251, and 261–281; these read FAFYAPCVWGTTYFVTTQFLP, ALPAGIILILGKNLPPVGWLW, LFVLGALNIGVFFVMLFFAAY, VVALVGSLQPLIVILLSFLLL, VAAVAGGIGIVLLISLPKAPL, PAGLVASALATMSMASGLVLT, MTMLTFTGWQLFCGGLVILPV, LAGYLYLAIPGSLLAYFMWFS, VIMSLLGFLSPLVALLLGFLF, and LVGVVFIFSALIIVQDISLFS. EamA domains follow at residues 12 to 130 and 149 to 276; these read CVWG…LLIS and MSMA…IVQD.

Belongs to the EamA transporter family.

It localises to the cell membrane. In terms of biological role, involved in pectinase, cellulase, and blue pigment regulation. The polypeptide is Protein PecM (pecM) (Dickeya dadantii (strain 3937) (Erwinia chrysanthemi (strain 3937))).